A 399-amino-acid chain; its full sequence is Beta-1,6-galactosyltransferase GALT31A (399 aa).

The Cytoplasmic segment spans residues 1 to 12 (MGMGRYQKSATS). Residues 13 to 35 (GVSARWVFVLCISSFLLGVLVVN) traverse the membrane as a helical; Signal-anchor for type II membrane protein segment. The Lumenal segment spans residues 36–399 (RLLASFETVD…GDGAIWHSSF (364 aa)).

The protein belongs to the glycosyltransferase 31 family. As to quaternary structure, interacts with GALT29A. Mn(2+) serves as cofactor.

Its subcellular location is the golgi apparatus membrane. It participates in protein modification; protein glycosylation. In terms of biological role, beta-galactosyltransferase involved in elongation of beta-1,6-linked galactan side chains on arabinogalactan proteins. Required for the progression of embryogenesis beyond the globular stage. Beta-galactosyltransferase involved in the biosynthesis of type II arabinogalactan. Transfers galactose from UDP-galactose to a mixture of various oligosaccharides derived from arabinogalactan proteins. Forms a complex with GALT29A that can work cooperatively to enhance the activities of adding galactose residues at O6 positions to beta-1,6-linked galactan and beta-1,3-linked galactan. The polypeptide is Beta-1,6-galactosyltransferase GALT31A (Arabidopsis thaliana (Mouse-ear cress)).